We begin with the raw amino-acid sequence, 192 residues long: Imidazoleglycerol-phosphate dehydratase (192 aa).

Belongs to the imidazoleglycerol-phosphate dehydratase family.

The protein resides in the cytoplasm. It carries out the reaction D-erythro-1-(imidazol-4-yl)glycerol 3-phosphate = 3-(imidazol-4-yl)-2-oxopropyl phosphate + H2O. It functions in the pathway amino-acid biosynthesis; L-histidine biosynthesis; L-histidine from 5-phospho-alpha-D-ribose 1-diphosphate: step 6/9. This chain is Imidazoleglycerol-phosphate dehydratase, found in Staphylococcus aureus (strain bovine RF122 / ET3-1).